A 581-amino-acid chain; its full sequence is Arginine--tRNA ligase (581 aa).

The 'HIGH' region signature appears at 131–141 (ANPTGPLHVGH).

Belongs to the class-I aminoacyl-tRNA synthetase family. Monomer.

The protein localises to the cytoplasm. The catalysed reaction is tRNA(Arg) + L-arginine + ATP = L-arginyl-tRNA(Arg) + AMP + diphosphate. This Nitrosospira multiformis (strain ATCC 25196 / NCIMB 11849 / C 71) protein is Arginine--tRNA ligase.